We begin with the raw amino-acid sequence, 343 residues long: Phosphoribosylformylglycinamidine cyclo-ligase (343 aa).

It belongs to the AIR synthase family.

The protein resides in the cytoplasm. The catalysed reaction is 2-formamido-N(1)-(5-O-phospho-beta-D-ribosyl)acetamidine + ATP = 5-amino-1-(5-phospho-beta-D-ribosyl)imidazole + ADP + phosphate + H(+). Its pathway is purine metabolism; IMP biosynthesis via de novo pathway; 5-amino-1-(5-phospho-D-ribosyl)imidazole from N(2)-formyl-N(1)-(5-phospho-D-ribosyl)glycinamide: step 2/2. The protein is Phosphoribosylformylglycinamidine cyclo-ligase of Enterococcus faecalis (strain ATCC 700802 / V583).